Consider the following 880-residue polypeptide: Protein translocase subunit SecA (880 aa).

ATP-binding positions include glutamine 87, 105 to 109, and aspartate 501; that span reads GEGKT. The Zn(2+) site is built by cysteine 864, cysteine 866, cysteine 875, and histidine 876.

Belongs to the SecA family. In terms of assembly, monomer and homodimer. Part of the essential Sec protein translocation apparatus which comprises SecA, SecYEG and auxiliary proteins SecDF-YajC and YidC. The cofactor is Zn(2+).

The protein localises to the cell inner membrane. The protein resides in the cytoplasm. It carries out the reaction ATP + H2O + cellular proteinSide 1 = ADP + phosphate + cellular proteinSide 2.. Its function is as follows. Part of the Sec protein translocase complex. Interacts with the SecYEG preprotein conducting channel. Has a central role in coupling the hydrolysis of ATP to the transfer of proteins into and across the cell membrane, serving both as a receptor for the preprotein-SecB complex and as an ATP-driven molecular motor driving the stepwise translocation of polypeptide chains across the membrane. This is Protein translocase subunit SecA from Orientia tsutsugamushi (strain Boryong) (Rickettsia tsutsugamushi).